A 241-amino-acid polypeptide reads, in one-letter code: Protein McbE (241 aa).

Helical transmembrane passes span 17–35 (TPFS…FFFL), 54–72 (ISWF…NYCL), 105–123 (LIMS…LTGF), 131–149 (IVMI…MVSL), 163–181 (STIY…IVSL), and 212–230 (LMTI…ISAL).

The protein localises to the cell membrane. Functionally, together with two further proteins McbF and McbG this protein causes immunity to the peptide antibiotic microcin B17 (MccB17), which inhibits DNA replication in enterobacteriaceae. Immunity is determined by two different mechanisms. McbE is involved in the production of extracellular MccB17 and, in a complex with McbF it also serves as 'pump' for the export of active MccB17 from the cytoplasm to the periplasmic space. This chain is Protein McbE (mcbE), found in Escherichia coli.